The sequence spans 55 residues: Spermatid nuclear transition protein 1 (55 aa).

The span at 1–42 shows a compositional bias: basic residues; sequence MSTSRKLKSQGMRRGKNRTPHKGVKRSGSKRKYRKSSLKSRK. The disordered stretch occupies residues 1 to 55; that stretch reads MSTSRKLKSQGMRRGKNRTPHKGVKRSGSKRKYRKSSLKSRKRCDDANRNLRSHL. Residues serine 9, serine 36, serine 37, and serine 40 each carry the phosphoserine modification.

Belongs to the nuclear transition protein 1 family. Testis.

It is found in the nucleus. It localises to the chromosome. Functionally, plays a key role in the replacement of histones to protamine in the elongating spermatids of mammals. In condensing spermatids, loaded onto the nucleosomes, where it promotes the recruitment and processing of protamines, which are responsible for histone eviction. The chain is Spermatid nuclear transition protein 1 (TNP1) from Bos taurus (Bovine).